The primary structure comprises 428 residues: YTH domain-containing protein ECT1 (428 aa).

One can recognise a YTH domain in the interval 245–382; sequence AKFFVIKSYS…EHGTKIIKIF (138 aa). RNA is bound by residues 251–253, aspartate 257, 267–268, asparagine 300, tryptophan 324, tryptophan 329, and tryptophan 337; these read KSY and WS.

As to quaternary structure, interacts (via C-terminus) with CIPK1. In terms of tissue distribution, expressed in root apex, shoot apex, lateral root primordia, stamens, carpels and trichomes.

It localises to the nucleus. Its subcellular location is the cytoplasm. Its function is as follows. Specifically recognizes and binds N6-methyladenosine (m6A)-containing RNAs, and regulates mRNA stability. M6A is a modification present at internal sites of mRNAs and some non-coding RNAs and plays a role in mRNA stability and processing. This Arabidopsis thaliana (Mouse-ear cress) protein is YTH domain-containing protein ECT1.